Here is a 437-residue protein sequence, read N- to C-terminus: Trigger factor (437 aa).

One can recognise a PPIase FKBP-type domain in the interval 161 to 246 (DDQVNIDFVG…VNSVSAPQLP (86 aa)).

The protein belongs to the FKBP-type PPIase family. Tig subfamily.

The protein localises to the cytoplasm. It catalyses the reaction [protein]-peptidylproline (omega=180) = [protein]-peptidylproline (omega=0). Functionally, involved in protein export. Acts as a chaperone by maintaining the newly synthesized protein in an open conformation. Functions as a peptidyl-prolyl cis-trans isomerase. The protein is Trigger factor of Pseudomonas putida (strain W619).